Reading from the N-terminus, the 103-residue chain is Flagellar hook-basal body complex protein FliE (103 aa).

Belongs to the FliE family.

The protein localises to the bacterial flagellum basal body. This Erwinia tasmaniensis (strain DSM 17950 / CFBP 7177 / CIP 109463 / NCPPB 4357 / Et1/99) protein is Flagellar hook-basal body complex protein FliE.